Reading from the N-terminus, the 662-residue chain is Protein associated with UVRAG as autophagy enhancer (662 aa).

Disordered stretches follow at residues 1–34 (MVSQSTVRQDSPVEPWEGISDHSGIIDGSPRLLN) and 58–131 (DVQQ…SLSS). A compositionally biased stretch (low complexity) spans 58–71 (DVQQQPQDLQSQVP). A compositionally biased stretch (polar residues) spans 100 to 113 (AETTLSEDTTDSVG). Over residues 114–131 (SASPHGSSEKSSSFSLSS) the composition is skewed to low complexity. At S157 the chain carries Phosphoserine; by MTOR. The interval 196 to 235 (EVFVLPVDVEKENAHFYVADMIISAMEKMKCNILSQQQTE) is interaction with UVRAG. K483, K523, K533, K573, and K633 each carry N6-acetyllysine.

In terms of assembly, interacts with UVRAG; the interaction is direct and promotes association with the PI3K/PI3KC3 and HOPS complexes. Interacts with STX17. In terms of processing, phosphorylated by MTOR at Ser-157 under nutrient-rich conditions. Phosphorylation prevents acetylation by KAT5/TIP60 and impairs RUBCNL/PACER function and autophagosome maturation. Under autophagy induction, Phosphorylation by MTOR is repressed, enabling acetylation by KAT5/TIP60. Post-translationally, acetylated by KAT5/TIP60 under autophagy induction, promoting autophagosome maturation and lipid metabolism. Acetylation is prevented by phosphorylation by MTOR. Lys-483 and Lys-573 constitute the key sites for tuning function in autophagy. Expressed weakly in cervical carcinoma cell lines.

The protein resides in the cytoplasmic vesicle. The protein localises to the autophagosome membrane. Its function is as follows. Regulator of autophagy that promotes autophagosome maturation by facilitating the biogenesis of phosphatidylinositol 3-phosphate (PtdIns(3)P) in late steps of autophagy. Acts by antagonizing RUBCN, thereby stimulating phosphatidylinositol 3-kinase activity of the PI3K/PI3KC3 complex. Following anchorage to the autophagosomal SNARE STX17, promotes the recruitment of PI3K/PI3KC3 and HOPS complexes to the autophagosome to regulate the fusion specificity of autophagosomes with late endosomes/lysosomes. Binds phosphoinositides phosphatidylinositol 3-phosphate (PtdIns(3)P), 4-phosphate (PtdIns(4)P) and 5-phosphate (PtdIns(5)P). In addition to its role in autophagy, acts as a regulator of lipid and glycogen homeostasis. May act as a tumor suppressor. This Homo sapiens (Human) protein is Protein associated with UVRAG as autophagy enhancer.